The following is a 646-amino-acid chain: Amyloid beta A4 precursor protein-binding family B member 1-interacting protein (646 aa).

The interval 82–141 (FATERDTSKGSVPVAPAPSKPQSNFSLPASFDSSKPATSSNSIAAPPPPPAFKPSKEEEE) is disordered. Over residues 101-116 (KPQSNFSLPASFDSSK) the composition is skewed to polar residues. In terms of domain architecture, Ras-associating spans 162 to 248 (KKLVVKVEIT…NKVLFQEKKH (87 aa)). The 110-residue stretch at 292–401 (VPDLEGVLYL…WVTGIRVAKY (110 aa)) folds into the PH domain. The disordered stretch occupies residues 420 to 646 (ASWANRTIQA…NAMQKKRTQP (227 aa)). The segment covering 429-445 (ASSTASTPSPTPKAKAA) has biased composition (low complexity). Pro residues-rich tracts occupy residues 465–500 (LPPPPPSMDFLPPPPPDPMFPPPPPAPPAPPAPPVP), 509–536 (FPPPPKFPQSSFPPPPMDDLPPPPPPPE), 560–577 (LPPPPPDPVASLPPPPPA), and 584–598 (APPPPPPPPPPPAPA).

Belongs to the MRL family.

The protein resides in the cell membrane. It localises to the cytoplasm. The protein localises to the cytoskeleton. Its function is as follows. Appears to function in the signal transduction from Ras activation to actin cytoskeletal remodeling. The polypeptide is Amyloid beta A4 precursor protein-binding family B member 1-interacting protein (apbb1ip) (Danio rerio (Zebrafish)).